Consider the following 270-residue polypeptide: Lipopolysaccharide core biosynthesis glycosyltransferase LpsC (270 aa).

It belongs to the glycosyltransferase 2 family. WaaE/KdtX subfamily.

The protein operates within bacterial outer membrane biogenesis; LPS core biosynthesis. The polypeptide is Lipopolysaccharide core biosynthesis glycosyltransferase LpsC (lpsC) (Rhizobium meliloti (strain 1021) (Ensifer meliloti)).